Here is a 745-residue protein sequence, read N- to C-terminus: Immunoglobulin superfamily containing leucine-rich repeat protein 2 (745 aa).

A signal peptide spans 1–19 (MGPFGALCLAWALLGVVRA). Positions 20–51 (CPEPCACVDKYAHQFADCAYKELREVPEGLPA) constitute an LRRNT domain. Topologically, residues 20–589 (CPEPCACVDK…VFSTKKELPS (570 aa)) are extracellular. N-linked (GlcNAc...) asparagine glycosylation is found at Asn-52 and Asn-73. LRR repeat units follow at residues 52–73 (NVTT…AFVN), 76–97 (QVTS…ALAV), 100–123 (QLKN…RNLS), 124–145 (ALQL…ALGA), and 148–169 (DLRS…TFDA). N-linked (GlcNAc...) asparagine glycosylation occurs at Asn-121. The 52-residue stretch at 181–232 (NPFHCSCGLVWLQAWAASTRVSLPEPDSIACASPPELQGVPVHRLPALPCAP) folds into the LRRCT domain. One can recognise an Ig-like domain in the interval 233–372 (PSVRLSAEPP…GTNSTSLRVT (140 aa)). The cysteines at positions 260 and 356 are disulfide-linked. Residues 290-300 (KEEDGGDKVED) are compositionally biased toward basic and acidic residues. A disordered region spans residues 290–328 (KEEDGGDKVEDGEGDGDEDLPTQTEAPTPTPAPAWPAPP). Residues 317-328 (TPTPAPAWPAPP) show a composition bias toward pro residues. Residues Asn-338 and Asn-365 are each glycosylated (N-linked (GlcNAc...) asparagine). The interval 376 to 423 (AGPPKHAPGTGEEPDAQVPTSERKATTKGRSNSVLPFKPEGKTKGQGL) is disordered. N-linked (GlcNAc...) asparagine glycans are attached at residues Asn-474 and Asn-563. A helical membrane pass occupies residues 590–610 (LLVIVTVSVFLLVLATVPLLG). The Cytoplasmic segment spans residues 611-745 (AACCHLLAKH…INGNYRQTAG (135 aa)). Residues 654–697 (SEKSYPARGEAGGEEPEEVPEEGLDEDVEQGDPSGDLQREESLA) form a disordered region. Over residues 665 to 683 (GGEEPEEVPEEGLDEDVEQ) the composition is skewed to acidic residues. The residue at position 719 (Tyr-719) is a Phosphotyrosine. Ser-720 is modified (phosphoserine).

In terms of assembly, homomultimer. Interacts with NTRK1/TrkA. As to expression, at 11.5 dpc, expressed in spinal nerves, their roots and the ventral spinal cord. At 12.5 dpc, detected in the ventral spinal cord, dorsal root ganglia (DRG), dorsal and ventral roots and sympathetic chain ganglia. At 12.5 dpc, expressed in almost all motor neurons which also express RET and in almost all DRG sensory neurons which also express NTRK1. At 18.5 dpc, expressed only in a subset of NTRK1-expressing neurons but still expressed in nearly all RET-expressing neurons.

The protein resides in the cell membrane. Required for axon extension during neural development. In Mus musculus (Mouse), this protein is Immunoglobulin superfamily containing leucine-rich repeat protein 2 (Islr2).